Reading from the N-terminus, the 235-residue chain is ATP-dependent dethiobiotin synthetase BioD (235 aa).

12–17 provides a ligand contact to ATP; it reads GVGKTF. A Mg(2+)-binding site is contributed by threonine 16. The active site involves lysine 37. Serine 41 provides a ligand contact to substrate. ATP-binding positions include aspartate 51, 112–115, and 202–204; these read EGAG and PKL. Positions 51 and 112 each coordinate Mg(2+).

Belongs to the dethiobiotin synthetase family. Homodimer. Mg(2+) is required as a cofactor.

The protein resides in the cytoplasm. It catalyses the reaction (7R,8S)-7,8-diammoniononanoate + CO2 + ATP = (4R,5S)-dethiobiotin + ADP + phosphate + 3 H(+). Its pathway is cofactor biosynthesis; biotin biosynthesis; biotin from 7,8-diaminononanoate: step 1/2. Functionally, catalyzes a mechanistically unusual reaction, the ATP-dependent insertion of CO2 between the N7 and N8 nitrogen atoms of 7,8-diaminopelargonic acid (DAPA, also called 7,8-diammoniononanoate) to form a ureido ring. The sequence is that of ATP-dependent dethiobiotin synthetase BioD from Bacillus licheniformis (strain ATCC 14580 / DSM 13 / JCM 2505 / CCUG 7422 / NBRC 12200 / NCIMB 9375 / NCTC 10341 / NRRL NRS-1264 / Gibson 46).